The following is an 80-amino-acid chain: MQYKTKTFLVIFLAYLVVTNEAEAFWSFLVKAASKILPSLIGGGDDNKSSSKRKREIEDFFDPYQRELDLELERLLSQLQ.

The signal sequence occupies residues 1 to 24; sequence MQYKTKTFLVIFLAYLVVTNEAEA. A propeptide spanning residues 56-80 is cleaved from the precursor; that stretch reads EIEDFFDPYQRELDLELERLLSQLQ.

This sequence belongs to the non-disulfide-bridged peptide (NDBP) superfamily. Medium-length antimicrobial peptide (group 3) family. In terms of tissue distribution, expressed by the venom gland.

It is found in the secreted. Its subcellular location is the target cell membrane. In terms of biological role, antimicrobial peptide. Has antifungal activity against all strains tested (MIC=12.5-200 uM). May act by disrupting the integrity of the bacterial cell membrane. The polypeptide is Probable antimicrobial peptide clone Con10 (Opisthacanthus cayaporum (South American scorpion)).